Reading from the N-terminus, the 181-residue chain is NAD(P)H-quinone oxidoreductase subunit 6, chloroplastic (181 aa).

The next 5 membrane-spanning stretches (helical) occupy residues 10-30 (TLLFVVLEFAILVGALGVVLL), 33-53 (VIYSALLLGFVFICVALLYLL), 62-82 (AQVLIYVGAVNVLIVFAIMLV), 98-118 (IISAFTFIALFVLLTIMIFTT), and 153-173 (LFPFELLSLLLLVALVGAITI).

The protein belongs to the complex I subunit 6 family. As to quaternary structure, NDH is composed of at least 16 different subunits, 5 of which are encoded in the nucleus.

It localises to the plastid. The protein localises to the chloroplast thylakoid membrane. It carries out the reaction a plastoquinone + NADH + (n+1) H(+)(in) = a plastoquinol + NAD(+) + n H(+)(out). The enzyme catalyses a plastoquinone + NADPH + (n+1) H(+)(in) = a plastoquinol + NADP(+) + n H(+)(out). NDH shuttles electrons from NAD(P)H:plastoquinone, via FMN and iron-sulfur (Fe-S) centers, to quinones in the photosynthetic chain and possibly in a chloroplast respiratory chain. The immediate electron acceptor for the enzyme in this species is believed to be plastoquinone. Couples the redox reaction to proton translocation, and thus conserves the redox energy in a proton gradient. This is NAD(P)H-quinone oxidoreductase subunit 6, chloroplastic (ndhG) from Zygnema circumcarinatum (Green alga).